We begin with the raw amino-acid sequence, 48 residues long: Osteocalcin (48 aa).

A Gla domain is found at 1 to 44; it reads AGTAPADLTVAQLESLKEVCEANLACEHMMDVSGIIAAYTAYYG. Ca(2+)-binding residues include E14, E18, E21, and E27. 3 positions are modified to 4-carboxyglutamate: E14, E18, and E21. An intrachain disulfide couples C20 to C26.

This sequence belongs to the osteocalcin/matrix Gla protein family. Post-translationally, gamma-carboxyglutamate residues are formed by vitamin K dependent carboxylation by GGCX. These residues are essential for the binding of calcium.

It localises to the secreted. The protein resides in the extracellular space. It is found in the extracellular matrix. Functionally, the carboxylated form is one of the main organic components of the bone matrix, which constitutes 1-2% of the total bone protein. The carboxylated form binds strongly to apatite and calcium. The sequence is that of Osteocalcin (bglap) from Cyprinus carpio (Common carp).